The chain runs to 669 residues: DNA ligase (669 aa).

Residues 34-38, 83-84, and glutamate 114 each bind NAD(+); these read DAEYD and SL. Lysine 116 serves as the catalytic N6-AMP-lysine intermediate. Residues arginine 137, glutamate 171, lysine 287, and lysine 311 each coordinate NAD(+). The Zn(2+) site is built by cysteine 405, cysteine 408, cysteine 423, and cysteine 428. Positions 591 to 669 constitute a BRCT domain; it reads NVESYFAGKT…EERFLQELNK (79 aa).

It belongs to the NAD-dependent DNA ligase family. LigA subfamily. Mg(2+) is required as a cofactor. The cofactor is Mn(2+).

It catalyses the reaction NAD(+) + (deoxyribonucleotide)n-3'-hydroxyl + 5'-phospho-(deoxyribonucleotide)m = (deoxyribonucleotide)n+m + AMP + beta-nicotinamide D-nucleotide.. DNA ligase that catalyzes the formation of phosphodiester linkages between 5'-phosphoryl and 3'-hydroxyl groups in double-stranded DNA using NAD as a coenzyme and as the energy source for the reaction. It is essential for DNA replication and repair of damaged DNA. The polypeptide is DNA ligase (Bacillus cereus (strain ZK / E33L)).